We begin with the raw amino-acid sequence, 306 residues long: D-alanine--D-alanine ligase (306 aa).

Residues 107–300 enclose the ATP-grasp domain; that stretch reads KEAYRAAGLP…FGQLCAWMVE (194 aa). 134–184 contacts ATP; sequence MQPPYVVKPYNEGSSVGVYIVTEAANGPPVLAPDLPATLMVEEYVPGRELS. Mg(2+) is bound by residues aspartate 251, glutamate 267, and asparagine 269.

Belongs to the D-alanine--D-alanine ligase family. Requires Mg(2+) as cofactor. It depends on Mn(2+) as a cofactor.

The protein resides in the cytoplasm. It catalyses the reaction 2 D-alanine + ATP = D-alanyl-D-alanine + ADP + phosphate + H(+). Its pathway is cell wall biogenesis; peptidoglycan biosynthesis. Cell wall formation. The polypeptide is D-alanine--D-alanine ligase (Ruegeria pomeroyi (strain ATCC 700808 / DSM 15171 / DSS-3) (Silicibacter pomeroyi)).